Consider the following 305-residue polypeptide: Acetyl-coenzyme A carboxylase carboxyl transferase subunit beta (305 aa).

Residues 25 to 294 (VWTKCDSCGQ…PGNDDVEIRS (270 aa)) form the CoA carboxyltransferase N-terminal domain. Zn(2+) is bound by residues C29, C32, C48, and C51. A C4-type zinc finger spans residues 29-51 (CDSCGQVLYRAELERNLGVCPKC). Positions 281-305 (NHPEPGNDDVEIRSDAPSESSQDDA) are disordered.

Belongs to the AccD/PCCB family. As to quaternary structure, acetyl-CoA carboxylase is a heterohexamer composed of biotin carboxyl carrier protein (AccB), biotin carboxylase (AccC) and two subunits each of ACCase subunit alpha (AccA) and ACCase subunit beta (AccD). It depends on Zn(2+) as a cofactor.

The protein resides in the cytoplasm. The enzyme catalyses N(6)-carboxybiotinyl-L-lysyl-[protein] + acetyl-CoA = N(6)-biotinyl-L-lysyl-[protein] + malonyl-CoA. It functions in the pathway lipid metabolism; malonyl-CoA biosynthesis; malonyl-CoA from acetyl-CoA: step 1/1. Functionally, component of the acetyl coenzyme A carboxylase (ACC) complex. Biotin carboxylase (BC) catalyzes the carboxylation of biotin on its carrier protein (BCCP) and then the CO(2) group is transferred by the transcarboxylase to acetyl-CoA to form malonyl-CoA. The polypeptide is Acetyl-coenzyme A carboxylase carboxyl transferase subunit beta (Pectobacterium atrosepticum (strain SCRI 1043 / ATCC BAA-672) (Erwinia carotovora subsp. atroseptica)).